Consider the following 238-residue polypeptide: Lytic polysaccharide monooxygenase NCU01050 (238 aa).

An N-terminal signal peptide occupies residues 1–15; sequence MKVLAPLVLASAASA. Histidine 16 contributes to the Cu(2+) binding site. O2 is bound at residue glutamate 45. Intrachain disulfides connect cysteine 54/cysteine 186 and cysteine 156/cysteine 238. Asparagine 75 carries N-linked (GlcNAc...) asparagine glycosylation. Histidine 99 provides a ligand contact to Cu(2+). Positions 172 and 181 each coordinate O2. Residue histidine 172 is the Proton donor of the active site. A Cu(2+)-binding site is contributed by tyrosine 183.

It belongs to the polysaccharide monooxygenase AA9 family. In terms of assembly, monomer. Cu(2+) is required as a cofactor. N-linked glycans containing mannose and N-acetylglucosamine.

It is found in the secreted. It catalyses the reaction [(1-&gt;4)-beta-D-glucosyl]n+m + reduced acceptor + O2 = 4-dehydro-beta-D-glucosyl-[(1-&gt;4)-beta-D-glucosyl]n-1 + [(1-&gt;4)-beta-D-glucosyl]m + acceptor + H2O.. Its pathway is glycan metabolism; cellulose degradation. Inhibited by increasing levels of ascorbic acid. Functionally, catalyzes the oxidative cleavage of glycosidic bonds in cellulosic substrates via a copper-dependent mechanism. In the presence of an exogenous reductant ascorbic acid, degrades phosphoric acid swollen cellulose (PASC) to cello-oligosaccharides and 4-ketoaldoses, the end products oxidized at the non-reducing end. Somewhat active toward tamarind xyloglucan and konjac glucomannan, with improved activity with glucomannan in the presence of PASC. H(2)O(2) is able to substitute for O(2) in reactions with PASC, xyloglucan and glucomannan. Very weak activity on cellopentaose. No activity with birchwood xylan or ivory nut mannan. Disrupts plant cell wall polysaccharide substrates, such as recalcitrant crystalline cellulose. This is Lytic polysaccharide monooxygenase NCU01050 from Neurospora crassa (strain ATCC 24698 / 74-OR23-1A / CBS 708.71 / DSM 1257 / FGSC 987).